A 339-amino-acid chain; its full sequence is Holliday junction branch migration complex subunit RuvB (339 aa).

The tract at residues 1-181 (MEERLVSGYE…FGMVHRLEFY (181 aa)) is large ATPase domain (RuvB-L). ATP contacts are provided by residues leucine 20, arginine 21, glycine 62, lysine 65, threonine 66, threonine 67, 128–130 (EDF), arginine 171, tyrosine 181, and arginine 218. Threonine 66 is a binding site for Mg(2+). The small ATPAse domain (RuvB-S) stretch occupies residues 182-252 (SVEELMLIIN…NAKAALDLLE (71 aa)). The interval 255–339 (ELGLDPTDRL…NKNAGELSLW (85 aa)) is head domain (RuvB-H). 2 residues coordinate DNA: arginine 310 and arginine 315.

This sequence belongs to the RuvB family. In terms of assembly, homohexamer. Forms an RuvA(8)-RuvB(12)-Holliday junction (HJ) complex. HJ DNA is sandwiched between 2 RuvA tetramers; dsDNA enters through RuvA and exits via RuvB. An RuvB hexamer assembles on each DNA strand where it exits the tetramer. Each RuvB hexamer is contacted by two RuvA subunits (via domain III) on 2 adjacent RuvB subunits; this complex drives branch migration. In the full resolvosome a probable DNA-RuvA(4)-RuvB(12)-RuvC(2) complex forms which resolves the HJ.

It localises to the cytoplasm. The catalysed reaction is ATP + H2O = ADP + phosphate + H(+). The RuvA-RuvB-RuvC complex processes Holliday junction (HJ) DNA during genetic recombination and DNA repair, while the RuvA-RuvB complex plays an important role in the rescue of blocked DNA replication forks via replication fork reversal (RFR). RuvA specifically binds to HJ cruciform DNA, conferring on it an open structure. The RuvB hexamer acts as an ATP-dependent pump, pulling dsDNA into and through the RuvAB complex. RuvB forms 2 homohexamers on either side of HJ DNA bound by 1 or 2 RuvA tetramers; 4 subunits per hexamer contact DNA at a time. Coordinated motions by a converter formed by DNA-disengaged RuvB subunits stimulates ATP hydrolysis and nucleotide exchange. Immobilization of the converter enables RuvB to convert the ATP-contained energy into a lever motion, pulling 2 nucleotides of DNA out of the RuvA tetramer per ATP hydrolyzed, thus driving DNA branch migration. The RuvB motors rotate together with the DNA substrate, which together with the progressing nucleotide cycle form the mechanistic basis for DNA recombination by continuous HJ branch migration. Branch migration allows RuvC to scan DNA until it finds its consensus sequence, where it cleaves and resolves cruciform DNA. The chain is Holliday junction branch migration complex subunit RuvB from Carboxydothermus hydrogenoformans (strain ATCC BAA-161 / DSM 6008 / Z-2901).